The primary structure comprises 194 residues: Adenylate kinase isoenzyme 1 (194 aa).

G19–T24 serves as a coordination point for ATP. The segment at S39–V68 is NMP. Residues T40, R45, E66–V68, G95–R98, and Q102 contribute to the AMP site. The tract at residues K132–D142 is LID. R133 lines the ATP pocket. Residues R139 and R150 each coordinate AMP. G178 contributes to the ATP binding site.

The protein belongs to the adenylate kinase family. AK1 subfamily. Monomer. Mg(2+) is required as a cofactor. Skeletal muscle.

It is found in the cytoplasm. It carries out the reaction a ribonucleoside 5'-phosphate + ATP = a ribonucleoside 5'-diphosphate + ADP. The enzyme catalyses AMP + ATP = 2 ADP. The catalysed reaction is dAMP + ATP = dADP + ADP. It catalyses the reaction dATP + AMP = dADP + ADP. It carries out the reaction dAMP + dATP = 2 dADP. The enzyme catalyses a 2'-deoxyribonucleoside 5'-diphosphate + ATP = a 2'-deoxyribonucleoside 5'-triphosphate + ADP. The catalysed reaction is a ribonucleoside 5'-diphosphate + ATP = a ribonucleoside 5'-triphosphate + ADP. It catalyses the reaction CDP + GTP = CTP + GDP. It carries out the reaction GDP + ATP = GTP + ADP. The enzyme catalyses UDP + ATP = UTP + ADP. The catalysed reaction is GTP + UDP = UTP + GDP. It catalyses the reaction dTDP + GTP = dTTP + GDP. It carries out the reaction dCDP + GTP = dCTP + GDP. The enzyme catalyses dGDP + ATP = dGTP + ADP. The catalysed reaction is dADP + GTP = dATP + GDP. It catalyses the reaction thiamine diphosphate + ADP = thiamine triphosphate + AMP. Its function is as follows. Catalyzes the reversible transfer of the terminal phosphate group between ATP and AMP. Also displays broad nucleoside diphosphate kinase activity. Plays an important role in cellular energy homeostasis and in adenine nucleotide metabolism. Also catalyzes at a very low rate the synthesis of thiamine triphosphate (ThTP) from thiamine diphosphate (ThDP) and ADP. The sequence is that of Adenylate kinase isoenzyme 1 from Gallus gallus (Chicken).